The primary structure comprises 555 residues: Zinc finger and SCAN domain-containing protein 21 (555 aa).

Disordered regions lie at residues Met1–Lys74, Thr102–Thr133, Leu204–Val243, and Glu263–Pro354. A run of 3 repeats spans residues Glu18–Leu56, Glu57–Leu95, and Glu96–Pro134. The 3 X 39 AA approximate tandem repeats stretch occupies residues Glu18–Pro134. Lys26 is covalently cross-linked (Glycyl lysine isopeptide (Lys-Gly) (interchain with G-Cter in SUMO2)). The SCAN box domain occupies Arg122–Leu204. The span at Gln210–Thr240 shows a compositional bias: polar residues. Residues Pro280–Lys302 are compositionally biased toward basic and acidic residues. Glycyl lysine isopeptide (Lys-Gly) (interchain with G-Cter in SUMO2) cross-links involve residues Lys302 and Lys313. Basic and acidic residues predominate over residues Ser316–Thr332. 7 C2H2-type zinc fingers span residues Tyr359–His381, Tyr387–His409, Tyr415–His436, Tyr442–His464, Tyr470–His492, Tyr498–His520, and Tyr526–His548. A Glycyl lysine isopeptide (Lys-Gly) (interchain with G-Cter in SUMO2) cross-link involves residue Lys431.

Belongs to the krueppel C2H2-type zinc-finger protein family. As to expression, expressed predominantly in the spermatocytes and spermatids of adult testes. It is also present at lower levels in the ovary, brain, spleen, embryo and fetus.

The protein localises to the nucleus. Its function is as follows. Strong transcriptional activator. Plays an important role in spermatogenesis; essential for the progression of meiotic prophase I in spermatocytes. This is Zinc finger and SCAN domain-containing protein 21 (Zscan21) from Mus musculus (Mouse).